An 89-amino-acid chain; its full sequence is Small ribosomal subunit protein uS15 (89 aa).

Belongs to the universal ribosomal protein uS15 family. In terms of assembly, part of the 30S ribosomal subunit. Forms a bridge to the 50S subunit in the 70S ribosome, contacting the 23S rRNA.

Functionally, one of the primary rRNA binding proteins, it binds directly to 16S rRNA where it helps nucleate assembly of the platform of the 30S subunit by binding and bridging several RNA helices of the 16S rRNA. Its function is as follows. Forms an intersubunit bridge (bridge B4) with the 23S rRNA of the 50S subunit in the ribosome. The polypeptide is Small ribosomal subunit protein uS15 (Ralstonia nicotianae (strain ATCC BAA-1114 / GMI1000) (Ralstonia solanacearum)).